Reading from the N-terminus, the 370-residue chain is Protein DVU_0535 (370 aa).

At Met1–Glu258 the chain is on the cytoplasmic side. 4Fe-4S ferredoxin-type domains follow at residues Tyr40–Ala70, Asp101–Asp132, and Gly133–Ala162. 16 residues coordinate [4Fe-4S] cluster: Cys49, Cys52, Cys55, Cys59, Cys110, Cys113, Cys118, Cys122, Cys142, Cys145, Cys148, Cys152, Cys172, Cys175, Cys187, and Cys191. The helical transmembrane segment at Tyr259–Ile284 threads the bilayer. Residues Thr285 to Ala370 are Periplasmic-facing. Over residues Phe345–Pro355 the composition is skewed to basic and acidic residues. Residues Phe345–Ala370 are disordered.

It is found in the cell membrane. Its function is as follows. HMWC (high-molecular-weight cytochrome c precursor), ORF2, ORF3, ORF4, ORF5, ORF6 in the HMC operon form a transmembrane protein complex that allows electron flow from the periplasmic hydrogenase to the cytoplasmic enzymes that catalyze reduction of sulfates. ORF2 is a transmembrane redox protein. This chain is Protein DVU_0535, found in Nitratidesulfovibrio vulgaris (strain ATCC 29579 / DSM 644 / CCUG 34227 / NCIMB 8303 / VKM B-1760 / Hildenborough) (Desulfovibrio vulgaris).